Reading from the N-terminus, the 138-residue chain is Basic phospholipase A2 B (138 aa).

The N-terminal stretch at methionine 1 to glycine 16 is a signal peptide. Intrachain disulfides connect cysteine 42–cysteine 131, cysteine 44–cysteine 60, cysteine 59–cysteine 111, cysteine 65–cysteine 138, cysteine 66–cysteine 104, cysteine 73–cysteine 97, and cysteine 91–cysteine 102. 3 residues coordinate Ca(2+): tyrosine 43, glycine 45, and glycine 47. Residue histidine 63 is part of the active site. Aspartate 64 serves as a coordination point for Ca(2+). Aspartate 105 is a catalytic residue.

This sequence belongs to the phospholipase A2 family. Group II subfamily. D49 sub-subfamily. Ca(2+) serves as cofactor. In terms of tissue distribution, expressed by the venom gland.

It localises to the secreted. The catalysed reaction is a 1,2-diacyl-sn-glycero-3-phosphocholine + H2O = a 1-acyl-sn-glycero-3-phosphocholine + a fatty acid + H(+). In terms of biological role, snake venom phospholipase A2 (PLA2) that shows potent hemolytic activity, and exhibits medium anticoagulant effects by binding to factor Xa (F10) and inhibiting the prothrombinase activity (IC(50) is 90 nM). It is one of the few phospholipases A2 capable of hydrolyzing the phospholipids of E.coli membranes in the presence of a bactericidal/permeability-increasing protein (BPI) of neutrophils. PLA2 catalyzes the calcium-dependent hydrolysis of the 2-acyl groups in 3-sn-phosphoglycerides. This chain is Basic phospholipase A2 B, found in Gloydius halys (Chinese water mocassin).